Reading from the N-terminus, the 144-residue chain is Cathelicidin-4 (144 aa).

A signal peptide spans 1-29 (MQTQRASLSLGRWSLWLLLLGLVVPSASA). The propeptide occupies 30–130 (QALSYREAVL…DLNCNELQSV (101 aa)). Cystine bridges form between Cys-85-Cys-96 and Cys-107-Cys-124. Position 143 is an arginine amide (Arg-143).

Belongs to the cathelicidin family. Post-translationally, elastase might be responsible for its maturation. Large granules of neutrophils.

Its subcellular location is the secreted. In terms of biological role, potent microbicidal activity; active against S.aureus and E.coli. The sequence is that of Cathelicidin-4 (CATHL4) from Bos taurus (Bovine).